The primary structure comprises 230 residues: Ribonuclease 3 (230 aa).

Residues 5–125 (YSRFYNILGY…VIGAIYLDSD (121 aa)) enclose the RNase III domain. Residue glutamate 40 participates in Mg(2+) binding. The active site involves aspartate 44. Residues aspartate 111 and glutamate 114 each contribute to the Mg(2+) site. The active site involves glutamate 114. Positions 153–223 (DSKSKLQEIL…AEKMIEMLSQ (71 aa)) constitute a DRBM domain.

Belongs to the ribonuclease III family. Homodimer. Mg(2+) serves as cofactor.

Its subcellular location is the cytoplasm. The catalysed reaction is Endonucleolytic cleavage to 5'-phosphomonoester.. In terms of biological role, digests double-stranded RNA. Involved in the processing of primary rRNA transcript to yield the immediate precursors to the large and small rRNAs (23S and 16S). Processes some mRNAs, and tRNAs when they are encoded in the rRNA operon. Processes pre-crRNA and tracrRNA of type II CRISPR loci if present in the organism. The polypeptide is Ribonuclease 3 (Francisella tularensis subsp. tularensis (strain WY96-3418)).